Reading from the N-terminus, the 179-residue chain is Gamma-glutamyl cyclotransferase verK (179 aa).

It belongs to the class-I pyridoxal-phosphate-dependent aminotransferase family.

It catalyses the reaction an alpha-(gamma-L-glutamyl)-L-amino acid = 5-oxo-L-proline + an L-alpha-amino acid. The protein operates within mycotoxin biosynthesis. In terms of biological role, gamma-glutamyl cyclotransferase; part of the gene cluster that mediates the biosynthesis of 11'-deoxyverticillin A, one of the dimeric epipolythiodioxopiperazines (ETPs) from the verticillin family that act as mycotoxins. 11'-deoxyverticillin A is required for normal conidiation. The nonribosomal peptide synthetase verP is speculated to be responsible for condensation of amino acids to form the carbon skeleton of verticillin, whereas the cluster-specific tailoring enzymes are involved in further modifications leading to the production of 11'-deoxyverticillin A. This chain is Gamma-glutamyl cyclotransferase verK, found in Clonostachys rogersoniana.